A 78-amino-acid chain; its full sequence is Large ribosomal subunit protein uL10 (78 aa).

A compositionally biased stretch (low complexity) spans 40 to 50 (AAAAAATAPAA). The segment at 40 to 78 (AAAAAATAPAAETKKEEKKEEKKEETEESDDDIGLSLFH) is disordered. Residues 51-64 (ETKKEEKKEEKKEE) show a composition bias toward basic and acidic residues.

The protein belongs to the universal ribosomal protein uL10 family. P0 forms a pentameric complex by interaction with dimers of P1 and P2.

The protein localises to the nucleus. The protein resides in the cytoplasm. Ribosomal protein P0 is the functional equivalent of E.coli protein L10. The polypeptide is Large ribosomal subunit protein uL10 (Culicoides nubeculosus (Biting midge)).